A 347-amino-acid chain; its full sequence is Extracellular metalloprotease (347 aa).

Positions 1 to 20 are cleaved as a signal peptide; sequence MKSRPICSVIPPYILHRIIA. The interval 43-68 is disordered; sequence SHHPRPEPHEKLPAGQANRSIHDAEQ. A Zn(2+)-binding site is contributed by histidine 162. Glutamate 163 is a catalytic residue. The Zn(2+) site is built by histidine 166 and glutamate 186. The active-site Proton donor is histidine 264.

The protein belongs to the peptidase M4 family. Ca(2+) is required as a cofactor. The cofactor is Zn(2+).

Its subcellular location is the secreted. The protein is Extracellular metalloprotease (prt1) of Pectobacterium carotovorum subsp. carotovorum (Erwinia carotovora subsp. carotovora).